The primary structure comprises 466 residues: Cysteine--tRNA ligase (466 aa).

Residue Cys-29 participates in Zn(2+) binding. Positions 31–41 (PTVYNYIHIGN) match the 'HIGH' region motif. 3 residues coordinate Zn(2+): Cys-209, His-234, and Glu-238. The 'KMSKS' region motif lies at 266-270 (KMSKS). ATP is bound at residue Lys-269. Ser-270 carries the phosphoserine modification.

It belongs to the class-I aminoacyl-tRNA synthetase family. Monomer. Zn(2+) serves as cofactor.

Its subcellular location is the cytoplasm. The catalysed reaction is tRNA(Cys) + L-cysteine + ATP = L-cysteinyl-tRNA(Cys) + AMP + diphosphate. This is Cysteine--tRNA ligase from Bacillus pumilus (strain SAFR-032).